The primary structure comprises 364 residues: Fructose-bisphosphate aldolase A (364 aa).

At Y5 the chain carries Phosphotyrosine. T9 bears the Phosphothreonine mark. Phosphoserine is present on residues S36 and S39. K42 is modified (N6-acetyllysine; alternate). K42 is covalently cross-linked (Glycyl lysine isopeptide (Lys-Gly) (interchain with G-Cter in SUMO1); alternate). Residue K42 forms a Glycyl lysine isopeptide (Lys-Gly) (interchain with G-Cter in SUMO2); alternate linkage. Beta-D-fructose 1,6-bisphosphate is bound at residue R43. Phosphoserine is present on S46. N6-(2-hydroxyisobutyryl)lysine is present on K99. The residue at position 108 (K108) is an N6-acetyllysine. K111 carries the N6-acetyllysine; alternate modification. Position 111 is an N6-malonyllysine; alternate (K111). S132 bears the Phosphoserine mark. K147 is subject to N6-(2-hydroxyisobutyryl)lysine. E188 functions as the Proton acceptor in the catalytic mechanism. K230 acts as the Schiff-base intermediate with dihydroxyacetone-P in catalysis. At S272 the chain carries Phosphoserine. Beta-D-fructose 1,6-bisphosphate contacts are provided by residues 272 to 274 (SGG), S301, and R304. An N6-malonyllysine modification is found at K312. K330 carries the post-translational modification N6-acetyllysine.

This sequence belongs to the class I fructose-bisphosphate aldolase family. As to quaternary structure, homotetramer. Interacts with SNX9 and WAS. Interacts with FBP2; the interaction blocks FBP2 inhibition by physiological concentrations of AMP and reduces inhibition by Ca(2+).

It localises to the cytoplasm. It is found in the myofibril. The protein localises to the sarcomere. Its subcellular location is the i band. The protein resides in the m line. It carries out the reaction beta-D-fructose 1,6-bisphosphate = D-glyceraldehyde 3-phosphate + dihydroxyacetone phosphate. Its pathway is carbohydrate degradation; glycolysis; D-glyceraldehyde 3-phosphate and glycerone phosphate from D-glucose: step 4/4. Its function is as follows. Catalyzes the reversible conversion of beta-D-fructose 1,6-bisphosphate (FBP) into two triose phosphate and plays a key role in glycolysis and gluconeogenesis. In addition, may also function as scaffolding protein. This Pan troglodytes (Chimpanzee) protein is Fructose-bisphosphate aldolase A (ALDOA).